The following is a 454-amino-acid chain: tRNA modification GTPase MnmE (454 aa).

Residues Arg23, Glu80, and Lys120 each coordinate (6S)-5-formyl-5,6,7,8-tetrahydrofolate. In terms of domain architecture, TrmE-type G spans 216–377 (GMKVVIAGRP…LRDHLKQSMG (162 aa)). Residue Asn226 participates in K(+) binding. Residues 226-231 (NAGKSS), 245-251 (TAIAGTT), 270-273 (DTAG), 335-338 (NKAD), and 358-360 (SAR) contribute to the GTP site. A Mg(2+)-binding site is contributed by Ser230. Residues Thr245, Ile247, and Thr250 each coordinate K(+). Residue Thr251 participates in Mg(2+) binding. A (6S)-5-formyl-5,6,7,8-tetrahydrofolate-binding site is contributed by Lys454.

The protein belongs to the TRAFAC class TrmE-Era-EngA-EngB-Septin-like GTPase superfamily. TrmE GTPase family. Homodimer. Heterotetramer of two MnmE and two MnmG subunits. K(+) serves as cofactor.

The protein resides in the cytoplasm. In terms of biological role, exhibits a very high intrinsic GTPase hydrolysis rate. Involved in the addition of a carboxymethylaminomethyl (cmnm) group at the wobble position (U34) of certain tRNAs, forming tRNA-cmnm(5)s(2)U34. This chain is tRNA modification GTPase MnmE, found in Pectobacterium atrosepticum (strain SCRI 1043 / ATCC BAA-672) (Erwinia carotovora subsp. atroseptica).